Reading from the N-terminus, the 156-residue chain is Small ribosomal subunit protein uS7 (156 aa).

This sequence belongs to the universal ribosomal protein uS7 family. In terms of assembly, part of the 30S ribosomal subunit. Contacts proteins S9 and S11.

Its function is as follows. One of the primary rRNA binding proteins, it binds directly to 16S rRNA where it nucleates assembly of the head domain of the 30S subunit. Is located at the subunit interface close to the decoding center, probably blocks exit of the E-site tRNA. The polypeptide is Small ribosomal subunit protein uS7 (Pseudarthrobacter chlorophenolicus (strain ATCC 700700 / DSM 12829 / CIP 107037 / JCM 12360 / KCTC 9906 / NCIMB 13794 / A6) (Arthrobacter chlorophenolicus)).